Here is a 208-residue protein sequence, read N- to C-terminus: Uracil phosphoribosyltransferase (208 aa).

5-phospho-alpha-D-ribose 1-diphosphate-binding positions include arginine 78, arginine 103, and 130–138 (DPMLATGGS). Uracil contacts are provided by residues isoleucine 193 and 198–200 (GDA). Aspartate 199 serves as a coordination point for 5-phospho-alpha-D-ribose 1-diphosphate.

It belongs to the UPRTase family. Mg(2+) serves as cofactor.

The enzyme catalyses UMP + diphosphate = 5-phospho-alpha-D-ribose 1-diphosphate + uracil. Its pathway is pyrimidine metabolism; UMP biosynthesis via salvage pathway; UMP from uracil: step 1/1. Allosterically activated by GTP. In terms of biological role, catalyzes the conversion of uracil and 5-phospho-alpha-D-ribose 1-diphosphate (PRPP) to UMP and diphosphate. The chain is Uracil phosphoribosyltransferase from Photorhabdus laumondii subsp. laumondii (strain DSM 15139 / CIP 105565 / TT01) (Photorhabdus luminescens subsp. laumondii).